Consider the following 153-residue polypeptide: Large ribosomal subunit protein uL30 (153 aa).

It belongs to the universal ribosomal protein uL30 family. As to quaternary structure, part of the 50S ribosomal subunit.

The chain is Large ribosomal subunit protein uL30 from Methanocorpusculum labreanum (strain ATCC 43576 / DSM 4855 / Z).